Consider the following 577-residue polypeptide: Arginine--tRNA ligase (577 aa).

The 'HIGH' region signature appears at 122 to 132 (PNVAKEMHVGH).

The protein belongs to the class-I aminoacyl-tRNA synthetase family. As to quaternary structure, monomer.

It localises to the cytoplasm. It catalyses the reaction tRNA(Arg) + L-arginine + ATP = L-arginyl-tRNA(Arg) + AMP + diphosphate. This chain is Arginine--tRNA ligase, found in Salmonella arizonae (strain ATCC BAA-731 / CDC346-86 / RSK2980).